The chain runs to 535 residues: Beta-amylase (535 aa).

3 residues coordinate substrate: D51, H91, and D99. Residue E184 is the Proton donor of the active site. Substrate contacts are provided by K293, H298, and T340. E378 (proton acceptor) is an active-site residue. Substrate contacts are provided by residues 379–380 and R418; that span reads NA. A run of 3 repeats spans residues 489 to 499, 500 to 510, and 511 to 521. The segment at 489–532 is 4 X 11 AA tandem repeats; it reads GPTGGMGGQAEGPTCGMGGQVKGPTGGMGGQAEDPTSGIGGELP. The interval 513–535 is disordered; it reads TGGMGGQAEDPTSGIGGELPATM. A 4; approximate repeat occupies 522 to 532; sequence DPTSGIGGELP.

Belongs to the glycosyl hydrolase 14 family. As to quaternary structure, monomer.

The catalysed reaction is Hydrolysis of (1-&gt;4)-alpha-D-glucosidic linkages in polysaccharides so as to remove successive maltose units from the non-reducing ends of the chains.. The sequence is that of Beta-amylase (BMY1) from Hordeum vulgare (Barley).